We begin with the raw amino-acid sequence, 297 residues long: Haloalkane dehalogenase (297 aa).

The AB hydrolase-1 domain maps to 47 to 148 (PPIVLLHGEP…AIARLVVANG (102 aa)). Asp123 serves as the catalytic Nucleophile. The active-site Proton donor is the Asp250. The Proton acceptor role is filled by His279.

Belongs to the haloalkane dehalogenase family. Type 1 subfamily. In terms of assembly, monomer.

It carries out the reaction 1-haloalkane + H2O = a halide anion + a primary alcohol + H(+). In terms of biological role, catalyzes hydrolytic cleavage of carbon-halogen bonds in halogenated aliphatic compounds, leading to the formation of the corresponding primary alcohols, halide ions and protons. This is Haloalkane dehalogenase from Mycobacterium marinum (strain ATCC BAA-535 / M).